Consider the following 346-residue polypeptide: NADH-ubiquinone oxidoreductase chain 2 (346 aa).

The next 10 helical transmembrane spans lie at 25-45 (HWILAWTGLEINTLAIIPLIS), 52-72 (AIEATIKYFLTQSTASALILF), 95-115 (CLMLTMAIAIKLGLVPFHFWF), 124-144 (LITALLLSTLMKLPPITLLLL), 149-169 (LNTTLLTLLAISSTLIGGWMG), 178-198 (ILAFSSISHLGWMIMIISYNP), 200-220 (LTILTFILYTIMTSTVFLSLA), 242-262 (ATVMLTLLSLAGLPPLTGFMP), 274-294 (EMTPMATIITMLSLLSLFFYL), and 326-346 (AILTALSTTLLPLSPLIITML).

Belongs to the complex I subunit 2 family. As to quaternary structure, core subunit of respiratory chain NADH dehydrogenase (Complex I) which is composed of 45 different subunits.

The protein localises to the mitochondrion inner membrane. The enzyme catalyses a ubiquinone + NADH + 5 H(+)(in) = a ubiquinol + NAD(+) + 4 H(+)(out). Its function is as follows. Core subunit of the mitochondrial membrane respiratory chain NADH dehydrogenase (Complex I) which catalyzes electron transfer from NADH through the respiratory chain, using ubiquinone as an electron acceptor. Essential for the catalytic activity and assembly of complex I. This chain is NADH-ubiquinone oxidoreductase chain 2 (MT-ND2), found in Gallus gallus (Chicken).